We begin with the raw amino-acid sequence, 204 residues long: GTP cyclohydrolase 1 (204 aa).

Positions 92, 95, and 165 each coordinate Zn(2+).

Belongs to the GTP cyclohydrolase I family. Homomer.

It catalyses the reaction GTP + H2O = 7,8-dihydroneopterin 3'-triphosphate + formate + H(+). It functions in the pathway cofactor biosynthesis; 7,8-dihydroneopterin triphosphate biosynthesis; 7,8-dihydroneopterin triphosphate from GTP: step 1/1. This is GTP cyclohydrolase 1 from Mycobacteroides abscessus (strain ATCC 19977 / DSM 44196 / CCUG 20993 / CIP 104536 / JCM 13569 / NCTC 13031 / TMC 1543 / L948) (Mycobacterium abscessus).